Here is a 169-residue protein sequence, read N- to C-terminus: S-ribosylhomocysteine lyase (169 aa).

Residues His-54, His-58, and Cys-128 each contribute to the Fe cation site.

The protein belongs to the LuxS family. In terms of assembly, homodimer. The cofactor is Fe cation.

It catalyses the reaction S-(5-deoxy-D-ribos-5-yl)-L-homocysteine = (S)-4,5-dihydroxypentane-2,3-dione + L-homocysteine. Its function is as follows. Involved in the synthesis of autoinducer 2 (AI-2) which is secreted by bacteria and is used to communicate both the cell density and the metabolic potential of the environment. The regulation of gene expression in response to changes in cell density is called quorum sensing. Catalyzes the transformation of S-ribosylhomocysteine (RHC) to homocysteine (HC) and 4,5-dihydroxy-2,3-pentadione (DPD). This Aeromonas hydrophila subsp. hydrophila (strain ATCC 7966 / DSM 30187 / BCRC 13018 / CCUG 14551 / JCM 1027 / KCTC 2358 / NCIMB 9240 / NCTC 8049) protein is S-ribosylhomocysteine lyase.